The following is a 486-amino-acid chain: Glutamyl-tRNA(Gln) amidotransferase subunit A (486 aa).

Catalysis depends on charge relay system residues lysine 79 and serine 154. Serine 178 functions as the Acyl-ester intermediate in the catalytic mechanism.

This sequence belongs to the amidase family. GatA subfamily. In terms of assembly, heterotrimer of A, B and C subunits.

It catalyses the reaction L-glutamyl-tRNA(Gln) + L-glutamine + ATP + H2O = L-glutaminyl-tRNA(Gln) + L-glutamate + ADP + phosphate + H(+). In terms of biological role, allows the formation of correctly charged Gln-tRNA(Gln) through the transamidation of misacylated Glu-tRNA(Gln) in organisms which lack glutaminyl-tRNA synthetase. The reaction takes place in the presence of glutamine and ATP through an activated gamma-phospho-Glu-tRNA(Gln). The chain is Glutamyl-tRNA(Gln) amidotransferase subunit A from Myxococcus xanthus (strain DK1622).